Here is a 263-residue protein sequence, read N- to C-terminus: Thiazole synthase (263 aa).

Catalysis depends on lysine 102, which acts as the Schiff-base intermediate with DXP. Residues glycine 164, 190–191 (AG), and 212–213 (NT) contribute to the 1-deoxy-D-xylulose 5-phosphate site.

The protein belongs to the ThiG family. As to quaternary structure, homotetramer. Forms heterodimers with either ThiH or ThiS.

The protein localises to the cytoplasm. It carries out the reaction [ThiS sulfur-carrier protein]-C-terminal-Gly-aminoethanethioate + 2-iminoacetate + 1-deoxy-D-xylulose 5-phosphate = [ThiS sulfur-carrier protein]-C-terminal Gly-Gly + 2-[(2R,5Z)-2-carboxy-4-methylthiazol-5(2H)-ylidene]ethyl phosphate + 2 H2O + H(+). It functions in the pathway cofactor biosynthesis; thiamine diphosphate biosynthesis. Its function is as follows. Catalyzes the rearrangement of 1-deoxy-D-xylulose 5-phosphate (DXP) to produce the thiazole phosphate moiety of thiamine. Sulfur is provided by the thiocarboxylate moiety of the carrier protein ThiS. In vitro, sulfur can be provided by H(2)S. The sequence is that of Thiazole synthase from Helicobacter hepaticus (strain ATCC 51449 / 3B1).